The primary structure comprises 134 residues: ATP synthase epsilon chain (134 aa).

This sequence belongs to the ATPase epsilon chain family. In terms of assembly, F-type ATPases have 2 components, CF(1) - the catalytic core - and CF(0) - the membrane proton channel. CF(1) has five subunits: alpha(3), beta(3), gamma(1), delta(1), epsilon(1). CF(0) has three main subunits: a, b and c.

The protein localises to the cellular thylakoid membrane. Produces ATP from ADP in the presence of a proton gradient across the membrane. The chain is ATP synthase epsilon chain from Prochlorococcus marinus (strain MIT 9301).